The following is a 213-amino-acid chain: Protein-L-isoaspartate O-methyltransferase (213 aa).

The active site involves S60.

It belongs to the methyltransferase superfamily. L-isoaspartyl/D-aspartyl protein methyltransferase family.

It is found in the cytoplasm. The enzyme catalyses [protein]-L-isoaspartate + S-adenosyl-L-methionine = [protein]-L-isoaspartate alpha-methyl ester + S-adenosyl-L-homocysteine. Its function is as follows. Catalyzes the methyl esterification of L-isoaspartyl residues in peptides and proteins that result from spontaneous decomposition of normal L-aspartyl and L-asparaginyl residues. It plays a role in the repair and/or degradation of damaged proteins. This chain is Protein-L-isoaspartate O-methyltransferase, found in Roseobacter denitrificans (strain ATCC 33942 / OCh 114) (Erythrobacter sp. (strain OCh 114)).